Reading from the N-terminus, the 237-residue chain is Ras-related protein Rab-23 (237 aa).

Positions 20, 21, 22, 23, 24, 38, and 41 each coordinate GTP. Residue Ser-23 coordinates Mg(2+). The Switch 1 signature appears at Arg-28–Phe-46. Mg(2+) is bound by residues Thr-41 and Asp-64. The Switch 2 signature appears at Thr-65 to Ala-84. GTP contacts are provided by Gly-67, Asn-121, Lys-122, Asp-124, Ser-151, Val-152, and Lys-153. Phosphoserine is present on residues Ser-186 and Ser-187. The segment covering Ser-188–Thr-208 has biased composition (polar residues). Residues Ser-188–Pro-237 are disordered. A Cysteine methyl ester modification is found at Cys-234. A lipid anchor (S-geranylgeranyl cysteine) is attached at Cys-234. A propeptide spans Ser-235–Pro-237 (removed in mature form).

Belongs to the small GTPase superfamily. Rab family. Interacts with SUFU. The cofactor is Mg(2+).

The protein localises to the cell membrane. The protein resides in the cytoplasm. Its subcellular location is the cytoplasmic vesicle. It localises to the autophagosome. It is found in the endosome membrane. The protein localises to the phagosome. The protein resides in the phagosome membrane. The catalysed reaction is GTP + H2O = GDP + phosphate + H(+). Regulated by guanine nucleotide exchange factors (GEFs) which promote the exchange of bound GDP for free GTP. Regulated by GTPase activating proteins (GAPs) which increase the GTP hydrolysis activity. Inhibited by GDP dissociation inhibitors (GDIs). Its function is as follows. The small GTPases Rab are key regulators of intracellular membrane trafficking, from the formation of transport vesicles to their fusion with membranes. Rabs cycle between an inactive GDP-bound form and an active GTP-bound form that is able to recruit to membranes different set of downstream effectors directly responsible for vesicle formation, movement, tethering and fusion. Together with SUFU, prevents nuclear import of GLI1, and thereby inhibits GLI1 transcription factor activity. Regulates GLI1 in differentiating chondrocytes. Likewise, regulates GLI3 proteolytic processing and modulates GLI2 and GLI3 transcription factor activity. Plays a role in autophagic vacuole assembly, and mediates defense against pathogens, such as S.aureus, by promoting their capture by autophagosomes that then merge with lysosomes. The polypeptide is Ras-related protein Rab-23 (Homo sapiens (Human)).